Reading from the N-terminus, the 189-residue chain is Protein F29A7.6 (189 aa).

Residues 124 to 161 form a disordered region; the sequence is KSLGGQKLAALDKKSQSKRERRQQNERNEETTGGRRFN. Residues 133–161 are compositionally biased toward basic and acidic residues; it reads ALDKKSQSKRERRQQNERNEETTGGRRFN.

Belongs to the MPP6 family.

In Caenorhabditis elegans, this protein is Protein F29A7.6.